Reading from the N-terminus, the 234-residue chain is Glucosamine-6-phosphate deaminase (234 aa).

The active-site Proton acceptor; for enolization step is D63. Residue N129 is the For ring-opening step of the active site. Residue H131 is the Proton acceptor; for ring-opening step of the active site. Catalysis depends on E136, which acts as the For ring-opening step.

It belongs to the glucosamine/galactosamine-6-phosphate isomerase family. NagB subfamily.

It carries out the reaction alpha-D-glucosamine 6-phosphate + H2O = beta-D-fructose 6-phosphate + NH4(+). It participates in amino-sugar metabolism; N-acetylneuraminate degradation; D-fructose 6-phosphate from N-acetylneuraminate: step 5/5. Its function is as follows. Catalyzes the reversible isomerization-deamination of glucosamine 6-phosphate (GlcN6P) to form fructose 6-phosphate (Fru6P) and ammonium ion. The polypeptide is Glucosamine-6-phosphate deaminase (Listeria welshimeri serovar 6b (strain ATCC 35897 / DSM 20650 / CCUG 15529 / CIP 8149 / NCTC 11857 / SLCC 5334 / V8)).